Here is a 143-residue protein sequence, read N- to C-terminus: Sorting nexin-3 (143 aa).

The PX domain maps to 23–140; sequence NILEIDVINP…SSFLQSPEFK (118 aa). Positions 66, 68, 92, 97, and 106 each coordinate a 1,2-diacyl-sn-glycero-3-phospho-(1D-myo-inositol-3-phosphate).

Belongs to the sorting nexin family.

It localises to the cytoplasm. Its subcellular location is the golgi apparatus membrane. The protein localises to the prevacuolar compartment membrane. Its function is as follows. Required for retention of late Golgi membrane proteins. Component of the retrieval machinery that functions by direct interaction with the cytosolic tails of certain TGN membrane proteins during the sorting/budding process at the prevacuolar compartment. Binds phosphatidylinositol 3-phosphate (PtdIns(P3)). This is Sorting nexin-3 (snx3) from Schizosaccharomyces pombe (strain 972 / ATCC 24843) (Fission yeast).